Consider the following 485-residue polypeptide: Ribosomal protein uS12 methylthiotransferase RimO (485 aa).

In terms of domain architecture, MTTase N-terminal spans 14 to 124 (PKVGFISLGC…VMAHVRELLP (111 aa)). [4Fe-4S] cluster contacts are provided by cysteine 23, cysteine 59, cysteine 88, cysteine 167, cysteine 171, and cysteine 174. Positions 153 to 389 (LTPRHYAYVK…MEVAQRISRE (237 aa)) constitute a Radical SAM core domain. One can recognise a TRAM domain in the interval 392 to 468 (AEKVGRVLDV…EYDLYGEVIH (77 aa)).

This sequence belongs to the methylthiotransferase family. RimO subfamily. The cofactor is [4Fe-4S] cluster.

The protein localises to the cytoplasm. It catalyses the reaction L-aspartate(89)-[ribosomal protein uS12]-hydrogen + (sulfur carrier)-SH + AH2 + 2 S-adenosyl-L-methionine = 3-methylsulfanyl-L-aspartate(89)-[ribosomal protein uS12]-hydrogen + (sulfur carrier)-H + 5'-deoxyadenosine + L-methionine + A + S-adenosyl-L-homocysteine + 2 H(+). Its function is as follows. Catalyzes the methylthiolation of an aspartic acid residue of ribosomal protein uS12. In Deinococcus geothermalis (strain DSM 11300 / CIP 105573 / AG-3a), this protein is Ribosomal protein uS12 methylthiotransferase RimO.